The primary structure comprises 158 residues: Ribonuclease H (158 aa).

In terms of domain architecture, RNase H type-1 spans 3–144 (ELKLIHIFTD…CDQLARAAAE (142 aa)). Aspartate 12, glutamate 50, aspartate 72, and aspartate 136 together coordinate Mg(2+).

Belongs to the RNase H family. In terms of assembly, monomer. The cofactor is Mg(2+).

It localises to the cytoplasm. It catalyses the reaction Endonucleolytic cleavage to 5'-phosphomonoester.. Functionally, endonuclease that specifically degrades the RNA of RNA-DNA hybrids. The polypeptide is Ribonuclease H (Shewanella sp. (strain MR-4)).